A 419-amino-acid chain; its full sequence is Serine--tRNA ligase (419 aa).

226-228 (TSE) is an L-serine binding site. Residues 257–259 (RRE) and valine 273 contribute to the ATP site. Position 280 (glutamate 280) interacts with L-serine. 344-347 (ELTS) lines the ATP pocket. Threonine 379 lines the L-serine pocket.

Belongs to the class-II aminoacyl-tRNA synthetase family. Type-1 seryl-tRNA synthetase subfamily. Homodimer. The tRNA molecule binds across the dimer.

The protein localises to the cytoplasm. The enzyme catalyses tRNA(Ser) + L-serine + ATP = L-seryl-tRNA(Ser) + AMP + diphosphate + H(+). It carries out the reaction tRNA(Sec) + L-serine + ATP = L-seryl-tRNA(Sec) + AMP + diphosphate + H(+). It functions in the pathway aminoacyl-tRNA biosynthesis; selenocysteinyl-tRNA(Sec) biosynthesis; L-seryl-tRNA(Sec) from L-serine and tRNA(Sec): step 1/1. Functionally, catalyzes the attachment of serine to tRNA(Ser). Is also able to aminoacylate tRNA(Sec) with serine, to form the misacylated tRNA L-seryl-tRNA(Sec), which will be further converted into selenocysteinyl-tRNA(Sec). In Mycobacterium tuberculosis (strain CDC 1551 / Oshkosh), this protein is Serine--tRNA ligase.